The following is a 172-amino-acid chain: 3-phenylpropionate/cinnamic acid dioxygenase subunit beta (172 aa).

Belongs to the bacterial ring-hydroxylating dioxygenase beta subunit family. This dioxygenase system consists of four proteins: the two subunits of the hydroxylase component (HcaE and HcaF), a ferredoxin (HcaC) and a ferredoxin reductase (HcaD).

It catalyses the reaction 3-phenylpropanoate + NADH + O2 + H(+) = 3-(cis-5,6-dihydroxycyclohexa-1,3-dien-1-yl)propanoate + NAD(+). The catalysed reaction is (E)-cinnamate + NADH + O2 + H(+) = (2E)-3-(cis-5,6-dihydroxycyclohexa-1,3-dien-1-yl)prop-2-enoate + NAD(+). It participates in aromatic compound metabolism; 3-phenylpropanoate degradation. In terms of biological role, part of the multicomponent 3-phenylpropionate dioxygenase. Converts 3-phenylpropionic acid (PP) and cinnamic acid (CI) into 3-phenylpropionate-dihydrodiol (PP-dihydrodiol) and cinnamic acid-dihydrodiol (CI-dihydrodiol), respectively. This Shigella sonnei (strain Ss046) protein is 3-phenylpropionate/cinnamic acid dioxygenase subunit beta.